Consider the following 739-residue polypeptide: Transcription regulator protein BACH1 (739 aa).

The region spanning 34-100 (CDVTVLVEGQ…AYTAKLILSK (67 aa)) is the BTB domain. Serine 196 carries the phosphoserine modification. Disordered stretches follow at residues 287–321 (MESE…PHGL) and 344–391 (KTVK…RSSV). 2 stretches are compositionally biased toward basic and acidic residues: residues 346–364 (VKTE…KPSE) and 376–391 (PKED…RSSV). Serine 448 carries the phosphoserine modification. The bZIP domain occupies 560 to 623 (CIHDIRRRSK…GETKQNLTGL (64 aa)). The basic motif stretch occupies residues 565-581 (RRRSKNRIAAQRCRKRK). Residues 585-592 (IQNLESEI) form a leucine-zipper region. The segment at 679–708 (PPTAPPPCGRGSSAASQELVQESPPTTAAA) is disordered. The span at 699-708 (QESPPTTAAA) shows a compositional bias: low complexity.

This sequence belongs to the bZIP family. CNC subfamily. In terms of assembly, heterodimer of BACH1 and MAFK. Ubiquitinated by the SCF(FBXL17) complex or by the by the SCF(FBXO22) complex, leading to its degradation by the proteasome. Under oxidative stress, reactive oxygen species covalently modify cysteine residues on the bZIP domain of BACH1 and release it from chromatin. If the BTB domain of BACH1 remains intact, its beta1-alpha6 degron is recognized by FBXO22, promoting its ubiquitination and degradation. If the structural integrity of the beta1-alpha6 degron is compromised, FBXL17 will transiently associate with the BACH1 BTB dimer and remodel it into stably bound monomer for ubiquitination and degradation. In terms of tissue distribution, ubiquitous.

Its subcellular location is the nucleus. In terms of biological role, transcriptional regulator that acts as a repressor or activator, depending on the context. Binds to NF-E2 DNA binding sites. Plays important roles in coordinating transcription activation and repression by MAFK. Together with MAF, represses the transcription of genes under the control of the NFE2L2 oxidative stress pathway. This Mus musculus (Mouse) protein is Transcription regulator protein BACH1 (Bach1).